We begin with the raw amino-acid sequence, 542 residues long: Chaperonin GroEL (542 aa).

ATP-binding positions include 29–32 (TLGP), 86–90 (DGTTT), glycine 413, 476–478 (NAA), and aspartate 492.

It belongs to the chaperonin (HSP60) family. Forms a cylinder of 14 subunits composed of two heptameric rings stacked back-to-back. Interacts with the co-chaperonin GroES.

The protein resides in the cytoplasm. The catalysed reaction is ATP + H2O + a folded polypeptide = ADP + phosphate + an unfolded polypeptide.. Together with its co-chaperonin GroES, plays an essential role in assisting protein folding. The GroEL-GroES system forms a nano-cage that allows encapsulation of the non-native substrate proteins and provides a physical environment optimized to promote and accelerate protein folding. This Listeria welshimeri serovar 6b (strain ATCC 35897 / DSM 20650 / CCUG 15529 / CIP 8149 / NCTC 11857 / SLCC 5334 / V8) protein is Chaperonin GroEL.